The chain runs to 632 residues: Transcription factor tazR (632 aa).

Residues 20 to 47 (CNECRARKLRCDRVRPTCGTCESLGVTC) constitute a DNA-binding region (zn(2)-C6 fungal-type). The tract at residues 77 to 130 (WNGQQKAAGGSPGESPPCSEGGQTLRAVSESTSDGVHDEDHANGARPPSSQSSI) is disordered.

The protein resides in the nucleus. Functionally, transcription factor that regulates the expression of the gene cluster that mediates the biosynthesis of azaterrilone A and other azaphilones, a class of fungal metabolites characterized by a highly oxygenated pyrano-quinone bicyclic core and exhibiting a broad range of bioactivities. The chain is Transcription factor tazR from Aspergillus terreus (strain NIH 2624 / FGSC A1156).